A 117-amino-acid chain; its full sequence is Immunoglobulin lambda variable 7-43 (117 aa).

An N-terminal signal peptide occupies residues 1–19; sequence MAWTPLFLFLLTCCPGSNS. Residues 20 to 44 form a framework-1 region; sequence QTVVTQEPSLTVSPGGTVTLTCASS. In terms of domain architecture, Ig-like spans 20-117; sequence QTVVTQEPSL…YCLLYYGGAQ (98 aa). A disulfide bond links cysteine 41 and cysteine 109. The segment at 45-53 is complementarity-determining-1; it reads TGAVTSGYY. Positions 54–70 are framework-2; sequence PNWFQQKPGQAPRALIY. Positions 71–73 are complementarity-determining-2; the sequence is STS. Residues 74 to 109 are framework-3; that stretch reads NKHSWTPARFSGSLLGGKAALTLSGVQPEDEAEYYC. Residues 110 to 117 form a complementarity-determining-3 region; the sequence is LLYYGGAQ.

Immunoglobulins are composed of two identical heavy chains and two identical light chains; disulfide-linked.

The protein localises to the secreted. Its subcellular location is the cell membrane. In terms of biological role, v region of the variable domain of immunoglobulin light chains that participates in the antigen recognition. Immunoglobulins, also known as antibodies, are membrane-bound or secreted glycoproteins produced by B lymphocytes. In the recognition phase of humoral immunity, the membrane-bound immunoglobulins serve as receptors which, upon binding of a specific antigen, trigger the clonal expansion and differentiation of B lymphocytes into immunoglobulins-secreting plasma cells. Secreted immunoglobulins mediate the effector phase of humoral immunity, which results in the elimination of bound antigens. The antigen binding site is formed by the variable domain of one heavy chain, together with that of its associated light chain. Thus, each immunoglobulin has two antigen binding sites with remarkable affinity for a particular antigen. The variable domains are assembled by a process called V-(D)-J rearrangement and can then be subjected to somatic hypermutations which, after exposure to antigen and selection, allow affinity maturation for a particular antigen. The sequence is that of Immunoglobulin lambda variable 7-43 from Homo sapiens (Human).